The primary structure comprises 58 residues: MLYWAAVFFIIAVIAAVLGFGGLVSASASIAQILFFIFLVLFVVSLIFGVVRRPGPPR.

Helical transmembrane passes span Trp-4 to Val-24 and Ile-30 to Val-50.

It belongs to the UPF0391 family.

Its subcellular location is the cell membrane. This Parvibaculum lavamentivorans (strain DS-1 / DSM 13023 / NCIMB 13966) protein is UPF0391 membrane protein Plav_0056.